Reading from the N-terminus, the 248-residue chain is Histone H1, gonadal (248 aa).

Disordered stretches follow at residues 1–46 (PGSP…PPVL) and 115–248 (AVAK…KARK). Positions 9 to 39 (ASPRKSPRKSPKKSPRKASASPRRKAKRARA) are enriched in basic residues. An H15 domain is found at 41–115 (THPPVLEMVQ…GASGRFRVGA (75 aa)). The span at 118–248 (KPKKAKKTSA…KRRSPKKARK (131 aa)) shows a compositional bias: basic residues.

It belongs to the histone H1/H5 family. As to expression, sperm.

The protein localises to the nucleus. The protein resides in the chromosome. Functionally, histones H1 are necessary for the condensation of nucleosome chains into higher-order structures. The chain is Histone H1, gonadal from Parechinus angulosus (Angulate sea urchin).